The primary structure comprises 444 residues: Phosphoglucosamine mutase (444 aa).

Ser99 (phosphoserine intermediate) is an active-site residue. Residues Ser99, Asp242, Asp244, and Asp246 each contribute to the Mg(2+) site. Ser99 bears the Phosphoserine mark.

Belongs to the phosphohexose mutase family. Requires Mg(2+) as cofactor. Post-translationally, activated by phosphorylation.

The catalysed reaction is alpha-D-glucosamine 1-phosphate = D-glucosamine 6-phosphate. Catalyzes the conversion of glucosamine-6-phosphate to glucosamine-1-phosphate. The protein is Phosphoglucosamine mutase of Aliarcobacter butzleri (strain RM4018) (Arcobacter butzleri).